The sequence spans 658 residues: Interferon-induced GTP-binding protein Mx1 (658 aa).

Met-1 carries the post-translational modification N-acetylmethionine. The segment at 1–20 is disordered; the sequence is MVNSKGKITDSDPGSSHLLL. Positions 65-338 constitute a Dynamin-type G domain; that stretch reads DLALPAIAVI…LITHICKTLP (274 aa). A G1 motif region spans residues 75–82; the sequence is GDQSSGKS. 75–82 lines the GTP pocket; that stretch reads GDQSSGKS. Residues 100–102 are G2 motif; that stretch reads VTR. The G3 motif stretch occupies residues 176–179; sequence DLPG. Residues 176–180 and 245–248 each bind GTP; these read DLPGI and TKPD. The interval 245-248 is G4 motif; that stretch reads TKPD. The segment at 277 to 280 is G5 motif; sequence KCRG. Residues 339 to 364 are bundle signaling element (BSE); the sequence is LLEKQIKENYEKITEELQKYGSDVPE. A middle domain region spans residues 364 to 531; the sequence is EEEHEKMFFL…HFQMEQIVYC (168 aa). The tract at residues 365 to 628 is stalk; it reads EEHEKMFFLI…KDTHNWLLKE (264 aa). Residues 551–554 form a critical for lipid-binding region; the sequence is KDKK. Residues 570 to 658 form the GED domain; sequence LSDIFEHLLA…ARRRLAKFPG (89 aa).

This sequence belongs to the TRAFAC class dynamin-like GTPase superfamily. Dynamin/Fzo/YdjA family. In terms of assembly, homooligomer. Oligomerizes into multimeric filamentous or ring-like structures by virtue of its stalk domain. Oligomerization is critical for GTPase activity, protein stability, and recognition of viral target structures. Interacts with TRPC1, TRPC3, TRPC4, TRPC5, TRPC6 and TRPC7. Interacts with HSPA5. Interacts with TUBB/TUBB5. Interacts with DDX39A and DDX39B. In terms of processing, ISGylated.

It is found in the cytoplasm. The protein localises to the endoplasmic reticulum membrane. The protein resides in the perinuclear region. Its function is as follows. Interferon-induced dynamin-like GTPase with antiviral activity. The polypeptide is Interferon-induced GTP-binding protein Mx1 (MX1) (Otaria byronia (South American sea lion)).